The following is a 481-amino-acid chain: 5-hydroxytryptamine receptor 2B (481 aa).

Residues 1–56 (MALSYRVSELQSTIPEHILQSTFVHVISSNWSGLQTESIPEEMKQIVEEQGNKLHW) are Extracellular-facing. A glycan (N-linked (GlcNAc...) asparagine) is linked at Asn-30. The helical transmembrane segment at 57–79 (AALLILMVIIPTIGGNTLVILAV) threads the bilayer. At 80–90 (SLEKKLQYATN) the chain is on the cytoplasmic side. A helical membrane pass occupies residues 91–113 (YFLMSLAVADLLVGLFVMPIALL). Residues 114-129 (TIMFEAMWPLPLVLCP) are Extracellular-facing. A disulfide bridge connects residues Cys-128 and Cys-207. Residues 130–151 (AWLFLDVLFSTASIMHLCAISV) form a helical membrane-spanning segment. The ergotamine site is built by Asp-135 and Thr-140. Residues 152–154 (DRY) carry the DRY motif; important for ligand-induced conformation changes motif. Residues 152–171 (DRYIAIKKPIQANQYNSRAT) are Cytoplasmic-facing. The chain crosses the membrane as a helical span at residues 172–192 (AFIKITVVWLISIGIAIPVPI). At 193 to 216 (KGIETDVDNPNNITCVLTKERFGD) the chain is on the extracellular side. Leu-209 contacts ergotamine. The short motif at 212–215 (ERFG) is the [DE]RFG motif; may stabilize a conformation that preferentially activates signaling via beta-arrestin family members element. Residues 217–239 (FMLFGSLAAFFTPLAIMIVTYFL) form a helical membrane-spanning segment. Over 240–324 (TIHALQKKAY…TISNEQRASK (85 aa)) the chain is Cytoplasmic. The chain crosses the membrane as a helical span at residues 325–345 (VLGIVFFLFLLMWCPFFITNI). The Extracellular segment spans residues 346–360 (TLVLCDSCNQTTLQM). Cys-350 and Cys-353 are joined by a disulfide. Residues 361–382 (LLEIFVWIGYVSSGVNPLVYTL) traverse the membrane as a helical segment. An NPxxY motif; important for ligand-induced conformation changes and signaling motif is present at residues 376 to 380 (NPLVY). The Cytoplasmic portion of the chain corresponds to 383 to 481 (FNKTFRDAFG…DKTEEQVSYV (99 aa)). Cys-397 carries the S-palmitoyl cysteine lipid modification. Residues 479 to 481 (SYV) carry the PDZ-binding motif.

It belongs to the G-protein coupled receptor 1 family. As to quaternary structure, interacts (via C-terminus) with MPDZ. Ubiquitous. Detected in liver, kidney, heart, pulmonary artery, and intestine. Detected at lower levels in blood, placenta and brain, especially in cerebellum, occipital cortex and frontal cortex.

The protein localises to the cell membrane. Its subcellular location is the synapse. It is found in the synaptosome. In terms of biological role, G-protein coupled receptor for 5-hydroxytryptamine (serotonin). Also functions as a receptor for various ergot alkaloid derivatives and psychoactive substances. Ligand binding causes a conformation change that triggers signaling via guanine nucleotide-binding proteins (G proteins) and modulates the activity of downstream effectors. HTR2B is coupled to G(q)/G(11) G alpha proteins and activates phospholipase C-beta, releasing diacylglycerol (DAG) and inositol 1,4,5-trisphosphate (IP3) second messengers that modulate the activity of phosphatidylinositol 3-kinase and promote the release of Ca(2+) ions from intracellular stores, respectively. Beta-arrestin family members inhibit signaling via G proteins and mediate activation of alternative signaling pathways. Plays a role in the regulation of dopamine and 5-hydroxytryptamine release, 5-hydroxytryptamine uptake and in the regulation of extracellular dopamine and 5-hydroxytryptamine levels, and thereby affects neural activity. May play a role in the perception of pain. Plays a role in the regulation of behavior, including impulsive behavior. Required for normal proliferation of embryonic cardiac myocytes and normal heart development. Protects cardiomyocytes against apoptosis. Plays a role in the adaptation of pulmonary arteries to chronic hypoxia. Plays a role in vasoconstriction. Required for normal osteoblast function and proliferation, and for maintaining normal bone density. Required for normal proliferation of the interstitial cells of Cajal in the intestine. The chain is 5-hydroxytryptamine receptor 2B from Homo sapiens (Human).